A 99-amino-acid chain; its full sequence is Large ribosomal subunit protein uL23 (99 aa).

Belongs to the universal ribosomal protein uL23 family. Part of the 50S ribosomal subunit. Contacts protein L29, and trigger factor when it is bound to the ribosome.

In terms of biological role, one of the early assembly proteins it binds 23S rRNA. One of the proteins that surrounds the polypeptide exit tunnel on the outside of the ribosome. Forms the main docking site for trigger factor binding to the ribosome. This chain is Large ribosomal subunit protein uL23, found in Francisella philomiragia subsp. philomiragia (strain ATCC 25017 / CCUG 19701 / FSC 153 / O#319-036).